Here is a 248-residue protein sequence, read N- to C-terminus: Probable transcriptional regulatory protein BRADO1143 (248 aa).

This sequence belongs to the TACO1 family.

The protein resides in the cytoplasm. This is Probable transcriptional regulatory protein BRADO1143 from Bradyrhizobium sp. (strain ORS 278).